An 868-amino-acid chain; its full sequence is Pentatricopeptide repeat-containing protein At2g27610 (868 aa).

PPR repeat units lie at residues 57–91, 92–126, 127–157, 158–192, 193–227, 228–258, 259–293, 294–328, 329–359, 361–395, 396–426, 427–457, 458–492, 493–528, 529–559, 560–594, 595–625, and 631–661; these read DRES…GMEM, DCSI…GFLD, DVSV…MKER, NVVT…GTQP, NSFT…GLDK, TIPV…TEVK, SVVT…YVRL, SESS…GFLF, DQNI…IGCV, NVVS…GVRP, NEFT…NYER, SSTV…IDDK, DIVA…GIKP, NEFT…RLDS, SLCV…QREK, DLVS…KVKM, DGVT…MVRD, and TKEH…MPNP. Residues 666-741 form a type E motif region; that stretch reads IWRTILAACR…EPGYSWIEVK (76 aa). The interval 742–772 is type E(+) motif; that stretch reads NKTYSFLAGDRSHPLKDQIYMKLEDLSTRLK. Positions 773–868 are type DYW motif; it reads DLGYEPDTSY…DGVCSCGDFW (96 aa).

Belongs to the PPR family. PCMP-H subfamily.

The polypeptide is Pentatricopeptide repeat-containing protein At2g27610 (PCMP-H60) (Arabidopsis thaliana (Mouse-ear cress)).